Consider the following 431-residue polypeptide: Na(+)-translocating NADH-quinone reductase subunit F (431 aa).

The chain crosses the membrane as a helical span at residues 10–30 (ISIASLVFCVIGLILSGIILI). Positions 41 to 133 (CKLKINDDDS…DMCLEIEERY (93 aa)) constitute a 2Fe-2S ferredoxin-type domain. Positions 76, 82, 85, and 117 each coordinate [2Fe-2S] cluster. An FAD-binding FR-type domain is found at 136 to 286 (ASSWEGTVVS…SGPYGESFMK (151 aa)).

The protein belongs to the NqrF family. In terms of assembly, composed of six subunits; NqrA, NqrB, NqrC, NqrD, NqrE and NqrF. Requires [2Fe-2S] cluster as cofactor. The cofactor is FAD.

It localises to the cell inner membrane. It carries out the reaction a ubiquinone + n Na(+)(in) + NADH + H(+) = a ubiquinol + n Na(+)(out) + NAD(+). In terms of biological role, NQR complex catalyzes the reduction of ubiquinone-1 to ubiquinol by two successive reactions, coupled with the transport of Na(+) ions from the cytoplasm to the periplasm. The first step is catalyzed by NqrF, which accepts electrons from NADH and reduces ubiquinone-1 to ubisemiquinone by a one-electron transfer pathway. This chain is Na(+)-translocating NADH-quinone reductase subunit F, found in Chlamydia caviae (strain ATCC VR-813 / DSM 19441 / 03DC25 / GPIC) (Chlamydophila caviae).